A 263-amino-acid polypeptide reads, in one-letter code: uncharacterized protein (263 aa).

An N-terminal signal peptide occupies residues 1–22 (MRYLKRVVLYRIVMVLSVFIIG). The N-palmitoyl cysteine moiety is linked to residue Cys-23. A lipid anchor (S-diacylglycerol cysteine) is attached at Cys-23.

The protein belongs to the staphylococcal tandem lipoprotein family.

The protein resides in the cell membrane. This is an uncharacterized protein from Staphylococcus aureus (strain bovine RF122 / ET3-1).